Here is a 201-residue protein sequence, read N- to C-terminus: Small ribosomal subunit protein uS4 (201 aa).

Positions M1–E45 are disordered. Residues S91–F157 form the S4 RNA-binding domain.

The protein belongs to the universal ribosomal protein uS4 family. In terms of assembly, part of the 30S ribosomal subunit. Contacts protein S5. The interaction surface between S4 and S5 is involved in control of translational fidelity.

In terms of biological role, one of the primary rRNA binding proteins, it binds directly to 16S rRNA where it nucleates assembly of the body of the 30S subunit. Functionally, with S5 and S12 plays an important role in translational accuracy. The polypeptide is Small ribosomal subunit protein uS4 (Cutibacterium acnes (strain DSM 16379 / KPA171202) (Propionibacterium acnes)).